The following is a 789-amino-acid chain: Isoamylase SU1, chloroplastic (789 aa).

The N-terminal 44 residues, 1-44 (MAQQLPCVSSPRPLLAVPAGRWRAGVRGRPNVAGLGRGRLSLHA), are a transit peptide targeting the chloroplast. The Nucleophile role is filled by D417. The active-site Proton donor is E473.

Belongs to the glycosyl hydrolase 13 family.

It localises to the plastid. The protein localises to the chloroplast. The enzyme catalyses Hydrolysis of (1-&gt;6)-alpha-D-glucosidic branch linkages in glycogen, amylopectin and their beta-limit dextrins.. It functions in the pathway glycan biosynthesis; starch biosynthesis. Isoamylase starch-debranching enzyme involved in amylopectin biosynthesis in endosperm. Functions by removing excess branches or improper branches that interfere with the formation of double helices of the cluster chains of amylopectin and crystallization of starch. The protein is Isoamylase SU1, chloroplastic of Zea mays (Maize).